We begin with the raw amino-acid sequence, 466 residues long: Asparagine--tRNA ligase (466 aa).

The protein belongs to the class-II aminoacyl-tRNA synthetase family. In terms of assembly, homodimer.

It localises to the cytoplasm. The enzyme catalyses tRNA(Asn) + L-asparagine + ATP = L-asparaginyl-tRNA(Asn) + AMP + diphosphate + H(+). This chain is Asparagine--tRNA ligase, found in Shewanella putrefaciens (strain CN-32 / ATCC BAA-453).